The primary structure comprises 291 residues: ATP synthase gamma chain (291 aa).

Belongs to the ATPase gamma chain family. As to quaternary structure, F-type ATPases have 2 components, CF(1) - the catalytic core - and CF(0) - the membrane proton channel. CF(1) has five subunits: alpha(3), beta(3), gamma(1), delta(1), epsilon(1). CF(0) has three main subunits: a, b and c.

The protein resides in the cell inner membrane. Its function is as follows. Produces ATP from ADP in the presence of a proton gradient across the membrane. The gamma chain is believed to be important in regulating ATPase activity and the flow of protons through the CF(0) complex. This Roseobacter denitrificans (strain ATCC 33942 / OCh 114) (Erythrobacter sp. (strain OCh 114)) protein is ATP synthase gamma chain.